Reading from the N-terminus, the 745-residue chain is Probable xyloglucan glycosyltransferase 3 (745 aa).

The next 2 helical transmembrane spans lie at 116-136 and 196-216; these read GFLL…LKGW and IDYI…LFMV. The active site involves Asp300. 2 residues coordinate substrate: Asp359 and Asp361. Asp453 is an active-site residue. A run of 4 helical transmembrane segments spans residues 531 to 551, 556 to 576, 695 to 715, and 720 to 740; these read LILP…TMFV, LPIW…ILPA, IFKK…RSLL, and LHFY…LDLI.

It belongs to the glycosyltransferase 2 family. Plant cellulose synthase-like C subfamily.

The protein localises to the golgi apparatus membrane. Its function is as follows. Probable beta-1,4-glucan synthase rather involved in the synthesis of the xyloglucan backbone than cellulose. Seems to work simultaneously with xyloglucan 6-xylosyltransferase. Xyloglucan is a noncellulosic polysaccharides of plant cell wall and consists of a glucan backbone substituted by xylose, galactose and fucose. The chain is Probable xyloglucan glycosyltransferase 3 (CSLC3) from Oryza sativa subsp. japonica (Rice).